The sequence spans 535 residues: GMP synthase [glutamine-hydrolyzing] (535 aa).

A Glutamine amidotransferase type-1 domain is found at 4-210 (KILILDFGSQ…VHEICKCKPD (207 aa)). Cys85 functions as the Nucleophile in the catalytic mechanism. Catalysis depends on residues His184 and Glu186. Residues 211–403 (WVMGDYIAEA…LGLPREMVYR (193 aa)) enclose the GMPS ATP-PPase domain. 238-244 (SGGVDSS) is a binding site for ATP.

Homodimer.

It catalyses the reaction XMP + L-glutamine + ATP + H2O = GMP + L-glutamate + AMP + diphosphate + 2 H(+). The protein operates within purine metabolism; GMP biosynthesis; GMP from XMP (L-Gln route): step 1/1. Catalyzes the synthesis of GMP from XMP. The protein is GMP synthase [glutamine-hydrolyzing] of Polynucleobacter necessarius subsp. necessarius (strain STIR1).